We begin with the raw amino-acid sequence, 490 residues long: Inosine-5'-monophosphate dehydrogenase (490 aa).

CBS domains are found at residues 96 to 154 and 158 to 218; these read MIIN…SKPV and MTKE…CKDE. Residues aspartate 252 and 302 to 304 contribute to the NAD(+) site; that span reads GVG. K(+) contacts are provided by glycine 304 and glycine 306. Serine 307 serves as a coordination point for IMP. Cysteine 309 is a K(+) binding site. Cysteine 309 acts as the Thioimidate intermediate in catalysis. IMP contacts are provided by residues 342-344, 365-366, and 389-393; these read DGG, GN, and YRGMG. Catalysis depends on arginine 406, which acts as the Proton acceptor. Glutamate 418 lines the IMP pocket. Positions 472, 473, and 474 each coordinate K(+).

Belongs to the IMPDH/GMPR family. In terms of assembly, homotetramer. K(+) is required as a cofactor.

It carries out the reaction IMP + NAD(+) + H2O = XMP + NADH + H(+). The protein operates within purine metabolism; XMP biosynthesis via de novo pathway; XMP from IMP: step 1/1. Its activity is regulated as follows. Mycophenolic acid (MPA) is a non-competitive inhibitor that prevents formation of the closed enzyme conformation by binding to the same site as the amobile flap. In contrast, mizoribine monophosphate (MZP) is a competitive inhibitor that induces the closed conformation. MPA is a potent inhibitor of mammalian IMPDHs but a poor inhibitor of the bacterial enzymes. MZP is a more potent inhibitor of bacterial IMPDH. Its function is as follows. Catalyzes the conversion of inosine 5'-phosphate (IMP) to xanthosine 5'-phosphate (XMP), the first committed and rate-limiting step in the de novo synthesis of guanine nucleotides, and therefore plays an important role in the regulation of cell growth. This Aquifex aeolicus (strain VF5) protein is Inosine-5'-monophosphate dehydrogenase.